A 118-amino-acid chain; its full sequence is Large ribosomal subunit protein bL20c (118 aa).

The protein belongs to the bacterial ribosomal protein bL20 family.

It is found in the plastid. Functionally, binds directly to 23S ribosomal RNA and is necessary for the in vitro assembly process of the 50S ribosomal subunit. It is not involved in the protein synthesizing functions of that subunit. In Aneura mirabilis (Parasitic liverwort), this protein is Large ribosomal subunit protein bL20c.